A 602-amino-acid polypeptide reads, in one-letter code: Laccase 1 (602 aa).

An N-terminal signal peptide occupies residues 1-20 (MDHFARVSLVAALLYTNTWA). Plastocyanin-like domains lie at 30–128 (TWEE…VRPK) and 157–345 (YLVV…RIPN). The Cu cation site is built by His-78, His-80, His-108, and His-110. N-linked (GlcNAc...) asparagine glycans are attached at residues Asn-176, Asn-241, Asn-264, Asn-388, Asn-430, Asn-454, and Asn-470. The region spanning 461–584 (NEGLLLRTRN…GGMGMVIMDG (124 aa)) is the Plastocyanin-like 3 domain. Cu cation is bound by residues His-492, His-495, and His-497. A glycan (N-linked (GlcNAc...) asparagine) is linked at Asn-512. Cu cation contacts are provided by His-566, Cys-567, His-568, and His-572.

It belongs to the multicopper oxidase family. Cu cation serves as cofactor.

The protein localises to the cell surface. Its pathway is pigment biosynthesis. Laccase; part of the Pks1 gene cluster that mediates the biosynthesis of an anthraquinone derivative pigment that contributes to conidial pigmentation that provides protection from UV radiation, heat and cold stress. The polyketide synthase Pks1 produces 1-acetyl-2,4,6,8-tetrahydroxy-9,10-anthraquinone though condensation of acetyl-CoA with malonyl-CoA. The dehydratase EthD and the laccase Mlac1 further convert the anthraquinone derivative into the final conidial pigment. The chain is Laccase 1 from Metarhizium album (strain ARSEF 1941).